The primary structure comprises 215 residues: Large ribosomal subunit protein uL3 (215 aa).

Residues 134-166 (MAHGSKNHRAPGSIGAGTTPGRVFPGKRMPGRM) form a disordered region.

The protein belongs to the universal ribosomal protein uL3 family. As to quaternary structure, part of the 50S ribosomal subunit. Forms a cluster with proteins L14 and L19.

Functionally, one of the primary rRNA binding proteins, it binds directly near the 3'-end of the 23S rRNA, where it nucleates assembly of the 50S subunit. This is Large ribosomal subunit protein uL3 from Gloeobacter violaceus (strain ATCC 29082 / PCC 7421).